The primary structure comprises 102 residues: NADH-quinone oxidoreductase subunit K (102 aa).

The next 3 membrane-spanning stretches (helical) occupy residues 5–25, 31–51, and 62–82; these read LAHYLVLGAILFAIGIFGIFL, IILLMSIELVLLAVNMNFVAF, and VFVFFILTVAAAEAAIGLAIL.

This sequence belongs to the complex I subunit 4L family. As to quaternary structure, NDH-1 is composed of 14 different subunits. Subunits NuoA, H, J, K, L, M, N constitute the membrane sector of the complex.

It is found in the cell inner membrane. The enzyme catalyses a quinone + NADH + 5 H(+)(in) = a quinol + NAD(+) + 4 H(+)(out). NDH-1 shuttles electrons from NADH, via FMN and iron-sulfur (Fe-S) centers, to quinones in the respiratory chain. The immediate electron acceptor for the enzyme in this species is believed to be ubiquinone. Couples the redox reaction to proton translocation (for every two electrons transferred, four hydrogen ions are translocated across the cytoplasmic membrane), and thus conserves the redox energy in a proton gradient. The chain is NADH-quinone oxidoreductase subunit K from Bordetella petrii (strain ATCC BAA-461 / DSM 12804 / CCUG 43448).